A 1088-amino-acid chain; its full sequence is PAN2-PAN3 deadenylation complex catalytic subunit pan2 (1088 aa).

4 WD repeats span residues 16–56 (VSTC…YTQF), 136–175 (HKDK…PVNK), 178–224 (AHTG…SLVP), and 270–309 (PLTS…SFSD). Residues 309 to 443 (DLKLPIQLPN…EDTISGPDSI (135 aa)) are linker. Positions 443–814 (IPKFYQRPVI…IPIIVYYEKL (372 aa)) constitute a USP domain. The 174-residue stretch at 860–1033 (VGIDSEFVAL…EDALTALKLY (174 aa)) folds into the Exonuclease domain. A divalent metal cation contacts are provided by aspartate 863, glutamate 865, aspartate 972, and aspartate 1025.

Belongs to the peptidase C19 family. PAN2 subfamily. As to quaternary structure, forms a heterotrimer with an asymmetric homodimer of the regulatory subunit ppk26/pan3 to form the poly(A)-nuclease (PAN) deadenylation complex. Requires a divalent metal cation as cofactor.

Its subcellular location is the cytoplasm. It carries out the reaction Exonucleolytic cleavage of poly(A) to 5'-AMP.. With respect to regulation, positively regulated by the regulatory subunit ppk26/pan3. Catalytic subunit of the poly(A)-nuclease (PAN) deadenylation complex, one of two cytoplasmic mRNA deadenylases involved in mRNA turnover. PAN specifically shortens poly(A) tails of RNA and the activity is stimulated by poly(A)-binding protein pab1. PAN deadenylation is followed by rapid degradation of the shortened mRNA tails by the CCR4-NOT complex. Deadenylated mRNAs are then degraded by two alternative mechanisms, namely exosome-mediated 3'-5' exonucleolytic degradation, or deadenylation-dependent mRNA decaping and subsequent 5'-3' exonucleolytic degradation by xrn1. May also be involved in post-transcriptional maturation of mRNA poly(A) tails. The sequence is that of PAN2-PAN3 deadenylation complex catalytic subunit pan2 from Schizosaccharomyces pombe (strain 972 / ATCC 24843) (Fission yeast).